Consider the following 144-residue polypeptide: Large ribosomal subunit protein uL11 (144 aa).

This sequence belongs to the universal ribosomal protein uL11 family. As to quaternary structure, part of the ribosomal stalk of the 50S ribosomal subunit. Interacts with L10 and the large rRNA to form the base of the stalk. L10 forms an elongated spine to which L12 dimers bind in a sequential fashion forming a multimeric L10(L12)X complex. One or more lysine residues are methylated.

Functionally, forms part of the ribosomal stalk which helps the ribosome interact with GTP-bound translation factors. In Parafrankia sp. (strain EAN1pec), this protein is Large ribosomal subunit protein uL11.